A 207-amino-acid polypeptide reads, in one-letter code: Riboflavin synthase (207 aa).

Lumazine-binding repeat units lie at residues 1–94 (MFTG…LGGH) and 95–191 (IVQG…INYL). Residues 4–6 (GLV), 45–47 (CLT), 59–64 (DVSPET), 98–100 (GHV), lysine 133, 142–144 (SLT), and 156–161 (NIIPHT) each bind 2,4-dihydroxypteridine.

In terms of assembly, homotrimer.

The catalysed reaction is 2 6,7-dimethyl-8-(1-D-ribityl)lumazine + H(+) = 5-amino-6-(D-ribitylamino)uracil + riboflavin. It functions in the pathway cofactor biosynthesis; riboflavin biosynthesis; riboflavin from 2-hydroxy-3-oxobutyl phosphate and 5-amino-6-(D-ribitylamino)uracil: step 2/2. Catalyzes the dismutation of two molecules of 6,7-dimethyl-8-ribityllumazine, resulting in the formation of riboflavin and 5-amino-6-(D-ribitylamino)uracil. This is Riboflavin synthase (ribE) from Aquifex aeolicus (strain VF5).